The following is a 306-amino-acid chain: Glutamyl-Q tRNA(Asp) synthetase (306 aa).

L-glutamate is bound by residues 29–33 and Asp-65; that span reads RFAPS. The 'HIGH' region signature appears at 32–42; the sequence is PSPTGPLHLGN. Residues Cys-121, Cys-123, Tyr-141, and Cys-145 each coordinate Zn(2+). Residues Tyr-188 and Arg-206 each coordinate L-glutamate. A 'KMSKS' region motif is present at residues 244 to 248; that stretch reads KLAKR. Lys-247 is an ATP binding site.

Belongs to the class-I aminoacyl-tRNA synthetase family. GluQ subfamily. The cofactor is Zn(2+).

Functionally, catalyzes the tRNA-independent activation of glutamate in presence of ATP and the subsequent transfer of glutamate onto a tRNA(Asp). Glutamate is transferred on the 2-amino-5-(4,5-dihydroxy-2-cyclopenten-1-yl) moiety of the queuosine in the wobble position of the QUC anticodon. In Prochlorococcus marinus (strain MIT 9303), this protein is Glutamyl-Q tRNA(Asp) synthetase.